A 150-amino-acid polypeptide reads, in one-letter code: Large ribosomal subunit protein uL15 (150 aa).

This sequence belongs to the universal ribosomal protein uL15 family. In terms of assembly, part of the 50S ribosomal subunit.

Binds to the 23S rRNA. This chain is Large ribosomal subunit protein uL15, found in Rickettsia prowazekii (strain Madrid E).